The sequence spans 893 residues: Probable disease resistance protein At1g62630 (893 aa).

The stretch at 24–68 (GSYTHNLEKNLVALETTMEELKAKRDDLLRRLKREEDRGLQRLSE) forms a coiled coil. The NB-ARC domain occupies 136 to 440 (TEQASTSAFE…CEEIIDGSEG (305 aa)). 179–186 (GMGGVGKT) is a binding site for ATP. LRR repeat units follow at residues 516–537 (VVRRMSLMGNKIHHLVGSYECM), 538–559 (ELTTLLLGEGEYGSIWRWSEIK), 571–593 (KLAVLDLSHNQSLFELPEEISNL), 595–617 (SLKYLNLSHTGIRHLSKGIQELK), 618–640 (KIIHLNLEHTSKLESIDGISSLH), and 641–663 (NLKVLKLYGSRLPWDLNTVKELE).

The protein belongs to the disease resistance NB-LRR family.

In terms of biological role, probable disease resistance protein. The chain is Probable disease resistance protein At1g62630 from Arabidopsis thaliana (Mouse-ear cress).